The sequence spans 294 residues: 33 kDa chaperonin (294 aa).

Cystine bridges form between cysteine 238/cysteine 240 and cysteine 271/cysteine 274.

It belongs to the HSP33 family. Post-translationally, under oxidizing conditions two disulfide bonds are formed involving the reactive cysteines. Under reducing conditions zinc is bound to the reactive cysteines and the protein is inactive.

It localises to the cytoplasm. Functionally, redox regulated molecular chaperone. Protects both thermally unfolding and oxidatively damaged proteins from irreversible aggregation. Plays an important role in the bacterial defense system toward oxidative stress. This is 33 kDa chaperonin from Caldanaerobacter subterraneus subsp. tengcongensis (strain DSM 15242 / JCM 11007 / NBRC 100824 / MB4) (Thermoanaerobacter tengcongensis).